The chain runs to 165 residues: Choriogonadotropin subunit beta (165 aa).

The first 20 residues, 1 to 20 (METLQGLLLWLLLSMGGAQA), serve as a signal peptide directing secretion. Cystine bridges form between C29/C77, C43/C92, C46/C130, C54/C108, C58/C110, and C113/C120. Residues N33 and N50 are each glycosylated (N-linked (GlcNAc...) asparagine). The tract at residues 131-165 (DDPNLQASSSSKDPPPSPPSPSRLLEPAGTPFLPQ) is disordered. 3 O-linked (GalNAc...) serine glycosylation sites follow: S141, S147, and S152.

This sequence belongs to the glycoprotein hormones subunit beta family. In terms of assembly, heterodimer of a common alpha chain and a unique beta chain which confers biological specificity to thyrotropin, lutropin, follitropin and gonadotropin. In terms of tissue distribution, placenta.

Its subcellular location is the secreted. Functionally, stimulates the ovaries to synthesize the steroids that are essential for the maintenance of pregnancy. The chain is Choriogonadotropin subunit beta (CGB) from Papio anubis (Olive baboon).